Consider the following 1204-residue polypeptide: ATP-dependent helicase/nuclease subunit A (1204 aa).

In terms of domain architecture, UvrD-like helicase ATP-binding spans 2–469; the sequence is TNFTKEQDQA…IILADNFRST (468 aa). An ATP-binding site is contributed by 23–30; it reads ASAGSGKT. One can recognise a UvrD-like helicase C-terminal domain in the interval 497–784; it reads GQLQFGASYY…KLMTIHASKG (288 aa).

It belongs to the helicase family. AddA subfamily. In terms of assembly, heterodimer of AddA and AddB/RexB. Mg(2+) is required as a cofactor.

The catalysed reaction is Couples ATP hydrolysis with the unwinding of duplex DNA by translocating in the 3'-5' direction.. It catalyses the reaction ATP + H2O = ADP + phosphate + H(+). In terms of biological role, the heterodimer acts as both an ATP-dependent DNA helicase and an ATP-dependent, dual-direction single-stranded exonuclease. Recognizes the chi site generating a DNA molecule suitable for the initiation of homologous recombination. The AddA nuclease domain is required for chi fragment generation; this subunit has the helicase and 3' -&gt; 5' nuclease activities. In Lactobacillus gasseri (strain ATCC 33323 / DSM 20243 / BCRC 14619 / CIP 102991 / JCM 1131 / KCTC 3163 / NCIMB 11718 / NCTC 13722 / AM63), this protein is ATP-dependent helicase/nuclease subunit A.